Consider the following 465-residue polypeptide: Argininosuccinate lyase (465 aa).

Belongs to the lyase 1 family. Argininosuccinate lyase subfamily.

The protein resides in the cytoplasm. It carries out the reaction 2-(N(omega)-L-arginino)succinate = fumarate + L-arginine. It participates in amino-acid biosynthesis; L-arginine biosynthesis; L-arginine from L-ornithine and carbamoyl phosphate: step 3/3. The chain is Argininosuccinate lyase from Desulfatibacillum aliphaticivorans.